A 66-amino-acid chain; its full sequence is Large ribosomal subunit protein bL32 (66 aa).

The protein belongs to the bacterial ribosomal protein bL32 family.

This Acetivibrio thermocellus (strain ATCC 27405 / DSM 1237 / JCM 9322 / NBRC 103400 / NCIMB 10682 / NRRL B-4536 / VPI 7372) (Clostridium thermocellum) protein is Large ribosomal subunit protein bL32.